The sequence spans 580 residues: Purine permease (580 aa).

12 consecutive transmembrane segments (helical) span residues 68–88 (PLVL…AGVI), 107–127 (SQYL…VQMF), 136–156 (YYVG…ITVA), 184–204 (YGAL…LSFM), 211–231 (ALFP…SLIG), 263–283 (LPWG…TIIL), 294–314 (SCAV…CGYF), 385–405 (LGNG…MSVF), 426–446 (CCFF…LVAI), 447–467 (PSSV…ISGV), 481–501 (FILT…DWFS), and 522–542 (LVMA…NLIL).

This sequence belongs to the nucleobase:cation symporter-2 (NCS2) (TC 2.A.40) family.

The protein resides in the membrane. In terms of biological role, able to transport with low efficiency all natural purines as well as purine analogs. This chain is Purine permease (uapC), found in Emericella nidulans (strain FGSC A4 / ATCC 38163 / CBS 112.46 / NRRL 194 / M139) (Aspergillus nidulans).